The chain runs to 505 residues: Formate--tetrahydrofolate ligase (505 aa).

Belongs to the formate--tetrahydrofolate ligase family.

The enzyme catalyses (6S)-5,6,7,8-tetrahydrofolate + formate + ATP = (6R)-10-formyltetrahydrofolate + ADP + phosphate. It participates in one-carbon metabolism; tetrahydrofolate interconversion. The protein is Formate--tetrahydrofolate ligase (fhs) of Bifidobacterium longum (strain NCC 2705).